The following is a 432-amino-acid chain: MRVVILGSGVVGVTSAWYLSQAGHDVTVIDREPGPALETSAANAGQISPGYAAPWAAPGVPLKAIKWMFQRHAPLAVRLDGTQFQLKWMWQMLRNCDTSHYMENKGRMVRLAEYSRDCLKELRAATGIEYEGRQGGTLQLFRTEQQFENATRDIAVLEDAGVPYQLLESNRLAEVEPALAAVAHKLTGGLRLPNDETGDCQLFTQRLAQMAEQAGVKFRFNTPVDKLLFEGEQIYGVKCGDEVIKADAYVMAFGSYSTAMLKGIVDIPVYPLKGYSLTIPVANEDGAPVSTILDETYKIAITRFDNRIRVGGMAEIVGFNTELLQPRRETLEMVVRDLYPRGGHIEQATFWTGLRPMTPDGTPVVGRTSFKNLWLNTGHGTLGWTMACGSGQLLSDILSGRTPAIPYDDLSVARYSSGFSPARPRHLHGVHN.

FAD is bound at residue 3–17; it reads VVILGSGVVGVTSAW.

Belongs to the DadA oxidoreductase family. FAD serves as cofactor.

It catalyses the reaction a D-alpha-amino acid + A + H2O = a 2-oxocarboxylate + AH2 + NH4(+). It functions in the pathway amino-acid degradation; D-alanine degradation; NH(3) and pyruvate from D-alanine: step 1/1. In terms of biological role, oxidative deamination of D-amino acids. In Escherichia fergusonii (strain ATCC 35469 / DSM 13698 / CCUG 18766 / IAM 14443 / JCM 21226 / LMG 7866 / NBRC 102419 / NCTC 12128 / CDC 0568-73), this protein is D-amino acid dehydrogenase.